Consider the following 963-residue polypeptide: Protein NLP2 (963 aa).

Residues 635–716 enclose the RWP-RK domain; that stretch reads RRPGEKRRTK…IDSVQGVQGS (82 aa). Residues 734 to 755 are compositionally biased toward polar residues; that stretch reads MSGTGTSFKNPNAQTENGVSAQ. Residues 734 to 794 form a disordered region; sequence MSGTGTSFKN…QSTNTGTTSN (61 aa). Residues 756 to 794 show a composition bias toward low complexity; the sequence is GTAAAPKSPPSSSCSHSSGSSTCCSTGANQSTNTGTTSN. In terms of domain architecture, PB1 spans 862–945; sequence ASKVKATFGE…RTIKISVHEA (84 aa).

It localises to the nucleus. Probable transcription factor. In Arabidopsis thaliana (Mouse-ear cress), this protein is Protein NLP2 (NLP2).